The sequence spans 276 residues: uncharacterized protein (276 aa).

This is an uncharacterized protein from Methanocaldococcus jannaschii (strain ATCC 43067 / DSM 2661 / JAL-1 / JCM 10045 / NBRC 100440) (Methanococcus jannaschii).